We begin with the raw amino-acid sequence, 131 residues long: Single-stranded DNA-binding protein 2 (131 aa).

Positions 1–103 (MYNKVIMIGR…VLASSFQLLE (103 aa)) constitute an SSB domain. The short motif at 126–131 (EEELPF) is the Important for interaction with partner proteins element.

Homotetramer.

Its function is as follows. Plays an important role in DNA replication, recombination and repair. Binds to ssDNA and to an array of partner proteins to recruit them to their sites of action during DNA metabolism. This is Single-stranded DNA-binding protein 2 (ssb2) from Streptococcus agalactiae serotype V (strain ATCC BAA-611 / 2603 V/R).